A 296-amino-acid polypeptide reads, in one-letter code: NAD kinase (296 aa).

The active-site Proton acceptor is aspartate 72. NAD(+) is bound by residues 72-73 (DG), 146-147 (ND), arginine 157, lysine 174, aspartate 176, 187-192 (TAYALS), and glutamine 247.

The protein belongs to the NAD kinase family. The cofactor is a divalent metal cation.

It localises to the cytoplasm. The catalysed reaction is NAD(+) + ATP = ADP + NADP(+) + H(+). Involved in the regulation of the intracellular balance of NAD and NADP, and is a key enzyme in the biosynthesis of NADP. Catalyzes specifically the phosphorylation on 2'-hydroxyl of the adenosine moiety of NAD to yield NADP. This Pseudomonas syringae pv. tomato (strain ATCC BAA-871 / DC3000) protein is NAD kinase.